Consider the following 565-residue polypeptide: Hemagglutinin-neuraminidase (565 aa).

Residues 1–20 (MVAEDAPVRGTCRVLFRTTT) are Intravirion-facing. The chain crosses the membrane as a helical span at residues 21–41 (LIFLCTLLALSISILYESLII). Over 42–565 (RKQIMSQAGS…VPFIRQVTLS (524 aa)) the chain is Virion surface. Asn110 and Asn139 each carry an N-linked (GlcNAc...) asparagine; by host glycan. 3 disulfide bridges follow: Cys161-Cys185, Cys175-Cys236, and Cys227-Cys240. The tract at residues 223 to 228 (NRKSCS) is involved in neuraminidase activity. Asn267 carries an N-linked (GlcNAc...) asparagine; by host glycan. 3 disulfides stabilise this stretch: Cys333–Cys454, Cys365–Cys375, and Cys448–Cys458. Residue Asn504 is glycosylated (N-linked (GlcNAc...) asparagine; by host). Cysteines 528 and 539 form a disulfide.

This sequence belongs to the paramyxoviruses hemagglutinin-neuraminidase family. As to quaternary structure, homotetramer; composed of disulfide-linked homodimers. Interacts with F protein trimer.

It is found in the virion membrane. It localises to the host cell membrane. It catalyses the reaction Hydrolysis of alpha-(2-&gt;3)-, alpha-(2-&gt;6)-, alpha-(2-&gt;8)- glycosidic linkages of terminal sialic acid residues in oligosaccharides, glycoproteins, glycolipids, colominic acid and synthetic substrates.. Functionally, attaches the virus to sialic acid-containing cell receptors and thereby initiating infection. Binding of HN protein to the receptor induces a conformational change that allows the F protein to trigger virion/cell membranes fusion. Its function is as follows. Neuraminidase activity ensures the efficient spread of the virus by dissociating the mature virions from the neuraminic acid containing glycoproteins. This is Hemagglutinin-neuraminidase (HN) from Canis lupus familiaris (Dog).